A 156-amino-acid chain; its full sequence is MTERKLIHIFTDGSCLGNPGPGGYGIVMNYKGHTKEMSDGFALTTNNRMELLAPIIALESLKEPCRVVLTSDSQYMRQGIMTWIHGWKKKGWMTSNRTPVKNVDLWKRLDKVSQMHTIDWQWVKGHAGHAENERCDILARSAAEANPTQIDEGYQP.

Positions 3–144 constitute an RNase H type-1 domain; it reads ERKLIHIFTD…CDILARSAAE (142 aa). 4 residues coordinate Mg(2+): Asp12, Glu50, Asp72, and Asp136.

The protein belongs to the RNase H family. In terms of assembly, monomer. Requires Mg(2+) as cofactor.

It is found in the cytoplasm. The enzyme catalyses Endonucleolytic cleavage to 5'-phosphomonoester.. Functionally, endonuclease that specifically degrades the RNA of RNA-DNA hybrids. This chain is Ribonuclease H, found in Shewanella putrefaciens (strain CN-32 / ATCC BAA-453).